A 278-amino-acid polypeptide reads, in one-letter code: Ribosomal RNA small subunit methyltransferase A (278 aa).

Positions 28, 30, 55, 77, 103, and 122 each coordinate S-adenosyl-L-methionine.

This sequence belongs to the class I-like SAM-binding methyltransferase superfamily. rRNA adenine N(6)-methyltransferase family. RsmA subfamily.

The protein localises to the cytoplasm. The enzyme catalyses adenosine(1518)/adenosine(1519) in 16S rRNA + 4 S-adenosyl-L-methionine = N(6)-dimethyladenosine(1518)/N(6)-dimethyladenosine(1519) in 16S rRNA + 4 S-adenosyl-L-homocysteine + 4 H(+). Specifically dimethylates two adjacent adenosines (A1518 and A1519) in the loop of a conserved hairpin near the 3'-end of 16S rRNA in the 30S particle. May play a critical role in biogenesis of 30S subunits. The sequence is that of Ribosomal RNA small subunit methyltransferase A from Cereibacter sphaeroides (strain ATCC 17029 / ATH 2.4.9) (Rhodobacter sphaeroides).